The primary structure comprises 602 residues: MSSDPMRNIRNFSIIAHVDHGKSTLADRIIQLCGGLEAREMEAQVLDSNPIERERGITIKAQSVSLLYKAQDGQNYHLNLIDTPGHVDFSYEVSRSLAACEGALLVVDASQGVEAQSVANCYTAVEQGLEVVPILNKIDLPTADTERAKAEIEAVIGIDASEAVAVSAKTGLYVEQVLEAIVQRIPAPQPRDTEKLQALIIDSWFDNYLGVVSLVRVMQGEITPGNKLLVMSTGRSHQVDAVGVFTPKRKTLAKLTAGEVGWVTASIKDVHGAPVGDTLTLTSDPAPKPLPGFQEVQPRVFAGLFPVDAEDYPDLREALEKLRLNDAALRFEPENSEAMGFGFRCGFLGMLHMEIVQERLEREYDLNLITTAPTVIYEVLKTDGTLVAMDNPAKMPPINQINEIREPIIRSNILTPPDYVGAVITLCEEKRGSQIGITYLGNQVQVAYELPMAEVVLDFFDKLKSVTRGYASLDYHFLRFQEGPFVRVDTLINGDRVDALSVIVHRHQAERRGRELCEKMKDLIPRQMFDVAIQAAIGSQIISRSTVKAMRKNVLAKCYGGDISRKKKLLEKQKEGKKRMKQIGRVEIPQEAFLAVLQIDNK.

One can recognise a tr-type G domain in the interval 7-189; that stretch reads RNIRNFSIIA…AIVQRIPAPQ (183 aa). Residues 19–24 and 136–139 each bind GTP; these read DHGKST and NKID.

Belongs to the TRAFAC class translation factor GTPase superfamily. Classic translation factor GTPase family. LepA subfamily.

It is found in the cell inner membrane. The enzyme catalyses GTP + H2O = GDP + phosphate + H(+). Required for accurate and efficient protein synthesis under certain stress conditions. May act as a fidelity factor of the translation reaction, by catalyzing a one-codon backward translocation of tRNAs on improperly translocated ribosomes. Back-translocation proceeds from a post-translocation (POST) complex to a pre-translocation (PRE) complex, thus giving elongation factor G a second chance to translocate the tRNAs correctly. Binds to ribosomes in a GTP-dependent manner. The protein is Elongation factor 4 of Xylella fastidiosa (strain M12).